The primary structure comprises 105 residues: DNA-binding protein HU (105 aa).

Belongs to the bacterial histone-like protein family.

Histone-like DNA-binding protein which is capable of wrapping DNA to stabilize it, and thus to prevent its denaturation under extreme environmental conditions. The polypeptide is DNA-binding protein HU (hup) (Treponema pallidum (strain Nichols)).